The chain runs to 155 residues: Gas vesicle protein K (155 aa).

Belongs to the gas vesicle GvpK family.

The protein localises to the gas vesicle. Its function is as follows. Might be involved in nucleating gas vesicle formation. Gas vesicles (GV) are hollow, gas filled proteinaceous nanostructures. During planktonic growth they allow positioning of the organism at a favorable depth for light or nutrient acquisition. In terms of biological role, cluster expression in E.coli (gvpA1-gvpA2-gvpC-gvpN-gvpJ-gvpK-gvpF-gvpG-gvpV-gvpW) allows cells to float and produces irregularly shaped gas vesicles. The polypeptide is Gas vesicle protein K (Nostoc sp. (strain PCC 7120 / SAG 25.82 / UTEX 2576)).